Here is a 103-residue protein sequence, read N- to C-terminus: Histone H4 (103 aa).

The span at 1-14 (MSGRGKGGKGLGKG) shows a compositional bias: gly residues. A disordered region spans residues 1–20 (MSGRGKGGKGLGKGGAKRHR). At S2 the chain carries N-acetylserine. 2 positions are modified to N6-acetyl-N6-methyllysine; alternate: K6 and K13. Position 17 is an N6-acetyllysine (K17). A DNA-binding region spans residues 17–21 (KRHRK). K21 is modified (N6-methyllysine).

It belongs to the histone H4 family. The nucleosome is a histone octamer containing two molecules each of H2A, H2B, H3 and H4 assembled in one H3-H4 heterotetramer and two H2A-H2B heterodimers. The octamer wraps approximately 147 bp of DNA.

It is found in the nucleus. The protein resides in the chromosome. In terms of biological role, core component of nucleosome. Nucleosomes wrap and compact DNA into chromatin, limiting DNA accessibility to the cellular machineries which require DNA as a template. Histones thereby play a central role in transcription regulation, DNA repair, DNA replication and chromosomal stability. DNA accessibility is regulated via a complex set of post-translational modifications of histones, also called histone code, and nucleosome remodeling. This Dendronephthya klunzingeri (Klunzinger's soft coral) protein is Histone H4 (H4DEKL).